The sequence spans 434 residues: Asparagine--tRNA ligase (434 aa).

The protein belongs to the class-II aminoacyl-tRNA synthetase family.

It localises to the cytoplasm. The catalysed reaction is tRNA(Asn) + L-asparagine + ATP = L-asparaginyl-tRNA(Asn) + AMP + diphosphate + H(+). This is Asparagine--tRNA ligase from Pyrococcus horikoshii (strain ATCC 700860 / DSM 12428 / JCM 9974 / NBRC 100139 / OT-3).